Reading from the N-terminus, the 332-residue chain is 3-dehydrosphinganine reductase (332 aa).

Positions 1 to 25 (MLLVVAAFIVAFVLLLYMISPLISP) are cleaved as a signal peptide. The NADPH site is built by Gly-39, Ser-41, Ser-42, Gly-43, Arg-64, Asp-65, Lys-68, and Asp-93. A GXSXG motif is present at residues 39-43 (GGSSG). Ser-172 functions as the Proton donor in the catalytic mechanism. Tyr-186 (proton acceptor) is an active-site residue. Positions 186 and 190 each coordinate NADP(+). Lys-190 serves as the catalytic Lowers pKa of active site Tyr.

Belongs to the short-chain dehydrogenases/reductases (SDR) family.

Its subcellular location is the endoplasmic reticulum. The catalysed reaction is sphinganine + NADP(+) = 3-oxosphinganine + NADPH + H(+). It functions in the pathway lipid metabolism; sphingolipid metabolism. Functionally, catalyzes the reduction of 3'-oxosphinganine (3-ketodihydrosphingosine/KDS) to sphinganine (dihydrosphingosine/DHS), the second step of de novo sphingolipid biosynthesis. This chain is 3-dehydrosphinganine reductase (kdsr), found in Danio rerio (Zebrafish).